A 160-amino-acid chain; its full sequence is Ribosomal RNA large subunit methyltransferase H (160 aa).

S-adenosyl-L-methionine is bound by residues glycine 108 and 127–132 (FGLMTW).

This sequence belongs to the RNA methyltransferase RlmH family. Homodimer.

The protein localises to the cytoplasm. It carries out the reaction pseudouridine(1915) in 23S rRNA + S-adenosyl-L-methionine = N(3)-methylpseudouridine(1915) in 23S rRNA + S-adenosyl-L-homocysteine + H(+). In terms of biological role, specifically methylates the pseudouridine at position 1915 (m3Psi1915) in 23S rRNA. The sequence is that of Ribosomal RNA large subunit methyltransferase H from Bartonella bacilliformis (strain ATCC 35685 / KC583 / Herrer 020/F12,63).